A 232-amino-acid polypeptide reads, in one-letter code: MLTRKQYELLRFINERLKESGIPPSFDEMKDALDLRSKSGIHRLITALEERGFIRRLANRARAIEVIKLPEPALGSGGRRGFTPSVIEGNLGKARGPASFDESGEQPVAVPVMGRIAAGTPIEALQTRSHTISVPPDMLGAGEHYALEVRGDSMVEAGILDGDMALIQRSENADTGDIVVALIDEEEATLKRFRRRGASIALEPANTAYEVRILPPNRVRIQGKLIGLYRKY.

Residues 26–46 (FDEMKDALDLRSKSGIHRLIT) constitute a DNA-binding region (H-T-H motif). Catalysis depends on for autocatalytic cleavage activity residues S153 and K191.

Belongs to the peptidase S24 family. In terms of assembly, homodimer.

The enzyme catalyses Hydrolysis of Ala-|-Gly bond in repressor LexA.. Functionally, represses a number of genes involved in the response to DNA damage (SOS response), including recA and lexA. In the presence of single-stranded DNA, RecA interacts with LexA causing an autocatalytic cleavage which disrupts the DNA-binding part of LexA, leading to derepression of the SOS regulon and eventually DNA repair. This is LexA repressor from Afipia carboxidovorans (strain ATCC 49405 / DSM 1227 / KCTC 32145 / OM5) (Oligotropha carboxidovorans).